Here is a 242-residue protein sequence, read N- to C-terminus: DNA repair protein RecO (242 aa).

It belongs to the RecO family. Monomer.

In terms of biological role, involved in DNA repair and RecF pathway recombination. The chain is DNA repair protein RecO from Shigella sonnei (strain Ss046).